The chain runs to 280 residues: Bicarbonate transport system permease protein CmpB (280 aa).

The next 7 helical transmembrane spans lie at 32–52 (PIFGILGFLLLWQLISSAGLI), 99–119 (YSLAAIVGISTGILVGTQPLL), 126–146 (IFQFLRMVAPLAWVPIALVAL), 153–173 (AIFVIFITSVWPILINTTEGV), 198–218 (ILIPSALPYIFTGLRIAIGLA), 219–239 (WLAIIAAEIVMSGIVGIGFFI), and 251–271 (IILAVFYIGAVGLLLDRGIAY). One can recognise an ABC transmembrane type-1 domain in the interval 88 to 266 (TLASLGRVAQ…YIGAVGLLLD (179 aa)).

The protein belongs to the binding-protein-dependent transport system permease family. The complex is composed of two ATP-binding proteins (CmpC and CmpD), a transmembrane protein (CmpB) and a solute-binding protein (CmpA).

The protein localises to the cell inner membrane. Part of the ABC transporter complex CmpABCD involved in bicarbonate transport. Probably responsible for the translocation of the substrate across the membrane. The sequence is that of Bicarbonate transport system permease protein CmpB (cmpB) from Synechocystis sp. (strain ATCC 27184 / PCC 6803 / Kazusa).